We begin with the raw amino-acid sequence, 370 residues long: Uroporphyrinogen decarboxylase (370 aa).

Substrate contacts are provided by residues 29 to 33 (RQAGR), D79, Y155, S210, and H342.

It belongs to the uroporphyrinogen decarboxylase family. As to quaternary structure, homodimer.

Its subcellular location is the cytoplasm. The catalysed reaction is uroporphyrinogen III + 4 H(+) = coproporphyrinogen III + 4 CO2. Its pathway is porphyrin-containing compound metabolism; protoporphyrin-IX biosynthesis; coproporphyrinogen-III from 5-aminolevulinate: step 4/4. Its function is as follows. Catalyzes the decarboxylation of four acetate groups of uroporphyrinogen-III to yield coproporphyrinogen-III. The sequence is that of Uroporphyrinogen decarboxylase from Delftia acidovorans (strain DSM 14801 / SPH-1).